Reading from the N-terminus, the 479-residue chain is Ribulose bisphosphate carboxylase large chain (479 aa).

Residues 1 to 2 constitute a propeptide that is removed on maturation; the sequence is MS. Pro-3 carries the post-translational modification N-acetylproline. Substrate contacts are provided by Asn-123 and Thr-173. Lys-175 (proton acceptor) is an active-site residue. Lys-177 is a binding site for substrate. Mg(2+) is bound by residues Lys-201, Asp-203, and Glu-204. Lys-201 bears the N6-carboxylysine mark. Catalysis depends on His-294, which acts as the Proton acceptor. 3 residues coordinate substrate: Arg-295, His-327, and Ser-379.

It belongs to the RuBisCO large chain family. Type I subfamily. Heterohexadecamer of 8 large chains and 8 small chains; disulfide-linked. The disulfide link is formed within the large subunit homodimers. The cofactor is Mg(2+). The disulfide bond which can form in the large chain dimeric partners within the hexadecamer appears to be associated with oxidative stress and protein turnover.

The protein localises to the plastid. It localises to the chloroplast. It catalyses the reaction 2 (2R)-3-phosphoglycerate + 2 H(+) = D-ribulose 1,5-bisphosphate + CO2 + H2O. It carries out the reaction D-ribulose 1,5-bisphosphate + O2 = 2-phosphoglycolate + (2R)-3-phosphoglycerate + 2 H(+). Its function is as follows. RuBisCO catalyzes two reactions: the carboxylation of D-ribulose 1,5-bisphosphate, the primary event in carbon dioxide fixation, as well as the oxidative fragmentation of the pentose substrate in the photorespiration process. Both reactions occur simultaneously and in competition at the same active site. This is Ribulose bisphosphate carboxylase large chain from Hordeum vulgare (Barley).